Reading from the N-terminus, the 447-residue chain is Tubulin beta chain (447 aa).

Residues Gln11, Glu69, Ser138, Gly142, Thr143, Gly144, Asn204, and Asn226 each contribute to the GTP site. Glu69 contributes to the Mg(2+) binding site. Residues 424-447 (QYQDAGVDEEEEEYEEEAPLEGEE) are disordered. The segment covering 429–447 (GVDEEEEEYEEEAPLEGEE) has biased composition (acidic residues).

This sequence belongs to the tubulin family. As to quaternary structure, dimer of alpha and beta chains. A typical microtubule is a hollow water-filled tube with an outer diameter of 25 nm and an inner diameter of 15 nM. Alpha-beta heterodimers associate head-to-tail to form protofilaments running lengthwise along the microtubule wall with the beta-tubulin subunit facing the microtubule plus end conferring a structural polarity. Microtubules usually have 13 protofilaments but different protofilament numbers can be found in some organisms and specialized cells. Mg(2+) is required as a cofactor.

It is found in the cytoplasm. The protein localises to the cytoskeleton. Functionally, tubulin is the major constituent of microtubules, a cylinder consisting of laterally associated linear protofilaments composed of alpha- and beta-tubulin heterodimers. Microtubules grow by the addition of GTP-tubulin dimers to the microtubule end, where a stabilizing cap forms. Below the cap, tubulin dimers are in GDP-bound state, owing to GTPase activity of alpha-tubulin. The polypeptide is Tubulin beta chain (tub-2) (Neurospora crassa (strain ATCC 24698 / 74-OR23-1A / CBS 708.71 / DSM 1257 / FGSC 987)).